Reading from the N-terminus, the 167-residue chain is NADH-ubiquinone oxidoreductase chain 6 (167 aa).

4 consecutive transmembrane segments (helical) span residues 24–44, 54–74, 85–105, and 135–155; these read PYFG…IILA, LLLI…ALVL, VLMK…GGYL, and WLLI…ILEI.

It belongs to the complex I subunit 6 family.

The protein localises to the mitochondrion membrane. It carries out the reaction a ubiquinone + NADH + 5 H(+)(in) = a ubiquinol + NAD(+) + 4 H(+)(out). Core subunit of the mitochondrial membrane respiratory chain NADH dehydrogenase (Complex I) that is believed to belong to the minimal assembly required for catalysis. Complex I functions in the transfer of electrons from NADH to the respiratory chain. The immediate electron acceptor for the enzyme is believed to be ubiquinone. This is NADH-ubiquinone oxidoreductase chain 6 (MT-ND6) from Myxine glutinosa (Atlantic hagfish).